Here is a 141-residue protein sequence, read N- to C-terminus: Large ribosomal subunit protein uL11 (141 aa).

This sequence belongs to the universal ribosomal protein uL11 family. As to quaternary structure, part of the ribosomal stalk of the 50S ribosomal subunit. Interacts with L10 and the large rRNA to form the base of the stalk. L10 forms an elongated spine to which L12 dimers bind in a sequential fashion forming a multimeric L10(L12)X complex. One or more lysine residues are methylated.

Forms part of the ribosomal stalk which helps the ribosome interact with GTP-bound translation factors. The polypeptide is Large ribosomal subunit protein uL11 (Bacillus cereus (strain ATCC 10987 / NRS 248)).